The sequence spans 428 residues: Divergent protein kinase domain 1A (428 aa).

The Cytoplasmic segment spans residues 1-27 (MARSLCPGAWLRKPYYLQARFSYVRMK). A helical transmembrane segment spans residues 28–48 (YLFFSWLVVFVGSWIIYVQYS). Over 49 to 428 (TYTELCRGKD…WKKISYTNDS (380 aa)) the chain is Lumenal.

This sequence belongs to the DIPK family. Post-translationally, among the many cysteines in the lumenal domain, most are probably involved in disulfide bonds.

The protein localises to the endoplasmic reticulum membrane. The chain is Divergent protein kinase domain 1A from Homo sapiens (Human).